Here is a 288-residue protein sequence, read N- to C-terminus: Diaminopimelate epimerase (288 aa).

The substrate site is built by asparagine 14 and asparagine 67. The active-site Proton donor is cysteine 76. Residues 77-78 (GN), asparagine 166, asparagine 199, and 217-218 (ER) contribute to the substrate site. The active-site Proton acceptor is the cysteine 226. 227–228 (GT) is a binding site for substrate.

This sequence belongs to the diaminopimelate epimerase family. In terms of assembly, homodimer.

It is found in the cytoplasm. The catalysed reaction is (2S,6S)-2,6-diaminopimelate = meso-2,6-diaminopimelate. The protein operates within amino-acid biosynthesis; L-lysine biosynthesis via DAP pathway; DL-2,6-diaminopimelate from LL-2,6-diaminopimelate: step 1/1. Its function is as follows. Catalyzes the stereoinversion of LL-2,6-diaminopimelate (L,L-DAP) to meso-diaminopimelate (meso-DAP), a precursor of L-lysine and an essential component of the bacterial peptidoglycan. The protein is Diaminopimelate epimerase of Bacillus cereus (strain AH820).